Consider the following 424-residue polypeptide: Piriformospora indica-insensitive protein 2 (424 aa).

The first 21 residues, 1 to 21, serve as a signal peptide directing secretion; sequence MLWQTFFSSLLLLSLLFGCNG. LRR repeat units lie at residues 141-166, 167-190, 191-213, 214-237, 238-263, 265-286, 287-311, 312-336, 337-360, and 362-387; these read ASNL…IGNL, TKLK…ICNL, KRLK…CFKG, LKEL…SFGD, LVSL…GFLK, LTLL…IENI, QSLT…NWGK, MSNL…LTNL, KRLR…KLEA, and PCLG…FYEK.

The protein resides in the cell membrane. In terms of biological role, required for growth promotion and enhanced seed production mediated by the endophytic fungus Piriformospora indica. The protein is Piriformospora indica-insensitive protein 2 (PII-2) of Arabidopsis thaliana (Mouse-ear cress).